The following is a 224-amino-acid chain: Adenylate kinase (224 aa).

10–15 (GSGKST) provides a ligand contact to ATP. An NMP region spans residues 30 to 59 (SSGDLIRREIERKSSLGREMEAYLSRGDLI). Residues Ser31, Arg36, 57-59 (DLI), 83-86 (GYPR), and Gln90 contribute to the AMP site. An LID region spans residues 124–161 (GRRICPNCGAVYHVKYNPPKVPGICDVCGSELIQRADD). Arg125 is a binding site for ATP. The Zn(2+) site is built by Cys128 and Cys131. 134 to 135 (VY) contributes to the ATP binding site. Zn(2+) contacts are provided by Cys148 and Cys151. AMP-binding residues include Arg158 and Arg169. Residue Gly197 participates in ATP binding.

The protein belongs to the adenylate kinase family. Monomer.

It is found in the cytoplasm. The enzyme catalyses AMP + ATP = 2 ADP. It functions in the pathway purine metabolism; AMP biosynthesis via salvage pathway; AMP from ADP: step 1/1. Its function is as follows. Catalyzes the reversible transfer of the terminal phosphate group between ATP and AMP. Plays an important role in cellular energy homeostasis and in adenine nucleotide metabolism. The polypeptide is Adenylate kinase (Thermococcus kodakarensis (strain ATCC BAA-918 / JCM 12380 / KOD1) (Pyrococcus kodakaraensis (strain KOD1))).